A 360-amino-acid chain; its full sequence is DNA replication and repair protein RecF (360 aa).

30–37 contacts ATP; sequence GHNGSGKT.

Belongs to the RecF family.

The protein localises to the cytoplasm. Its function is as follows. The RecF protein is involved in DNA metabolism; it is required for DNA replication and normal SOS inducibility. RecF binds preferentially to single-stranded, linear DNA. It also seems to bind ATP. This Shewanella denitrificans (strain OS217 / ATCC BAA-1090 / DSM 15013) protein is DNA replication and repair protein RecF.